Reading from the N-terminus, the 258-residue chain is Small ribosomal subunit protein mS35 (258 aa).

Residues 1–39 (MAFNPLLSLLKADAIFLGQLSKSSFCATSRAFSVFYFTR) constitute a mitochondrion transit peptide.

It belongs to the mitochondrion-specific ribosomal protein mS35 family. As to quaternary structure, component of the mitochondrial small ribosomal subunit (mt-SSU). Mature yeast 74S mitochondrial ribosomes consist of a small (37S) and a large (54S) subunit. The 37S small subunit contains a 15S ribosomal RNA (15S mt-rRNA) and at least 32 different proteins. The 54S large subunit contains a 21S rRNA (21S mt-rRNA) and at least 45 different proteins.

It localises to the mitochondrion. Its function is as follows. Component of the mitochondrial ribosome (mitoribosome), a dedicated translation machinery responsible for the synthesis of mitochondrial genome-encoded proteins, including at least some of the essential transmembrane subunits of the mitochondrial respiratory chain. The mitoribosomes are attached to the mitochondrial inner membrane and translation products are cotranslationally integrated into the membrane. The protein is Small ribosomal subunit protein mS35 (rsm24) of Schizosaccharomyces pombe (strain 972 / ATCC 24843) (Fission yeast).